Consider the following 751-residue polypeptide: MEGPEIQSAEAVIDNGSYGKRVVRFETGRLARQAAGSAMVYIDEETSMLSATAVGKHPREGFDFFPLTVDVEERMYAAGRIPGSFFRREGRPSTDAILTCRLIDRPLRPAFGKGLRNEVQVVVTVMSIAPDEIYNTVAINAASMSTTLSGMPFQGPVGGVRMALMAEENGGHQWIAFPKHSQLENAVFDMAVAGRVVTTKDGGQDVAIMMVEAEATDNAWELIKGQGAVAPSEELVAEGLEASKPFIKALCDAQADLAARNRKPELDLPRFGGFGDDAAQAVEQFVGERMAQVYSIAGKQEREAATDELHHDTLAELTGEGKPFEGRADEVNGAYQALTKQTVRQRILKDKVRIDGRGLTDIRQLSAEVDVLPRVHGSALFERGETQIMGVTTLNMLKMEQQIDSLSPVKHKRYIHHYNFPPYSTGETGRVGSPKRREIGHGALAERAITPVLPSREEFPYAIRQVSEALGSNGSTSMGSVCASTLALYNAGVPLRAPVAGIAMGLVSDTVDGEVQYAALTDILGAEDALGDMDFKVAGTREFVTAIQLDTKLDGIPASVLASALTQAREARLYILDVLTSAIDAPDEMSEFAPRVISVTVPVSKIGEVIGPKGKMINQIQEDTGTDISIEDDGTVYIGATDGPSAEAARSAINAIANPQVPEVGERYLGTVVKTTTFGAFVSLTPGKDGLLHISEMRQLNDDKRVNEVDDVLSVGQKVQVEITKVDDRGKLSLAPVVAGSDSDAASDDEN.

D528 and D534 together coordinate Mg(2+). Residues 594 to 653 (PRVISVTVPVSKIGEVIGPKGKMINQIQEDTGTDISIEDDGTVYIGATDGPSAEAARSAI) enclose the KH domain. One can recognise an S1 motif domain in the interval 665–737 (GERYLGTVVK…DRGKLSLAPV (73 aa)).

This sequence belongs to the polyribonucleotide nucleotidyltransferase family. Mg(2+) serves as cofactor.

The protein resides in the cytoplasm. It carries out the reaction RNA(n+1) + phosphate = RNA(n) + a ribonucleoside 5'-diphosphate. In terms of biological role, involved in mRNA degradation. Catalyzes the phosphorolysis of single-stranded polyribonucleotides processively in the 3'- to 5'-direction. In Kocuria rhizophila (strain ATCC 9341 / DSM 348 / NBRC 103217 / DC2201), this protein is Polyribonucleotide nucleotidyltransferase.